Consider the following 242-residue polypeptide: Phosphoribosylaminoimidazole-succinocarboxamide synthase (242 aa).

Belongs to the SAICAR synthetase family.

The enzyme catalyses 5-amino-1-(5-phospho-D-ribosyl)imidazole-4-carboxylate + L-aspartate + ATP = (2S)-2-[5-amino-1-(5-phospho-beta-D-ribosyl)imidazole-4-carboxamido]succinate + ADP + phosphate + 2 H(+). Its pathway is purine metabolism; IMP biosynthesis via de novo pathway; 5-amino-1-(5-phospho-D-ribosyl)imidazole-4-carboxamide from 5-amino-1-(5-phospho-D-ribosyl)imidazole-4-carboxylate: step 1/2. This chain is Phosphoribosylaminoimidazole-succinocarboxamide synthase (purC), found in Methanocaldococcus jannaschii (strain ATCC 43067 / DSM 2661 / JAL-1 / JCM 10045 / NBRC 100440) (Methanococcus jannaschii).